A 273-amino-acid chain; its full sequence is 2,3,4,5-tetrahydropyridine-2,6-dicarboxylate N-succinyltransferase (273 aa).

Substrate contacts are provided by R105 and D142.

It belongs to the transferase hexapeptide repeat family. In terms of assembly, homotrimer.

The protein localises to the cytoplasm. The enzyme catalyses (S)-2,3,4,5-tetrahydrodipicolinate + succinyl-CoA + H2O = (S)-2-succinylamino-6-oxoheptanedioate + CoA. It functions in the pathway amino-acid biosynthesis; L-lysine biosynthesis via DAP pathway; LL-2,6-diaminopimelate from (S)-tetrahydrodipicolinate (succinylase route): step 1/3. The polypeptide is 2,3,4,5-tetrahydropyridine-2,6-dicarboxylate N-succinyltransferase (Bordetella avium (strain 197N)).